The following is a 421-amino-acid chain: Caspase-12 (421 aa).

The region spanning 1–92 (MADKKPSKED…QLSLEYQHES (92 aa)) is the CARD domain. At Ser85 the chain carries Phosphoserine. The disordered stretch occupies residues 88 to 131 (YQHESEDQESEESSASSSSSTESEEENEESKDEERAASAHSMAV). A compositionally biased stretch (acidic residues) spans 109–118 (ESEEENEESK). Residues His252 and Cys300 contribute to the active site.

It belongs to the peptidase C14A family. As to quaternary structure, heterotetramer that consists of two anti-parallel arranged heterodimers, each one formed by two subunits (Potential). May interact with TRAF2.

Involved in the activation cascade of caspases responsible for apoptosis execution. This chain is Caspase-12, found in Macaca mulatta (Rhesus macaque).